A 178-amino-acid polypeptide reads, in one-letter code: Large ribosomal subunit protein uL6 (178 aa).

This sequence belongs to the universal ribosomal protein uL6 family. Part of the 50S ribosomal subunit.

Functionally, this protein binds to the 23S rRNA, and is important in its secondary structure. It is located near the subunit interface in the base of the L7/L12 stalk, and near the tRNA binding site of the peptidyltransferase center. This chain is Large ribosomal subunit protein uL6, found in Lactiplantibacillus plantarum (strain ATCC BAA-793 / NCIMB 8826 / WCFS1) (Lactobacillus plantarum).